Consider the following 215-residue polypeptide: Probable transaldolase (215 aa).

Catalysis depends on Lys-83, which acts as the Schiff-base intermediate with substrate.

It belongs to the transaldolase family. Type 3B subfamily.

The protein localises to the cytoplasm. The enzyme catalyses D-sedoheptulose 7-phosphate + D-glyceraldehyde 3-phosphate = D-erythrose 4-phosphate + beta-D-fructose 6-phosphate. It participates in carbohydrate degradation; pentose phosphate pathway; D-glyceraldehyde 3-phosphate and beta-D-fructose 6-phosphate from D-ribose 5-phosphate and D-xylulose 5-phosphate (non-oxidative stage): step 2/3. In terms of biological role, transaldolase is important for the balance of metabolites in the pentose-phosphate pathway. This Methanococcus vannielii (strain ATCC 35089 / DSM 1224 / JCM 13029 / OCM 148 / SB) protein is Probable transaldolase.